Consider the following 228-residue polypeptide: DNA mismatch repair protein MutH (228 aa).

This sequence belongs to the MutH family.

Its subcellular location is the cytoplasm. Sequence-specific endonuclease that cleaves unmethylated GATC sequences. It is involved in DNA mismatch repair. The polypeptide is DNA mismatch repair protein MutH (Serratia proteamaculans (strain 568)).